The following is an 873-amino-acid chain: F-box only protein 41 (873 aa).

Residues 85–97 (ESTSFQGKEQATG) are compositionally biased toward polar residues. Disordered stretches follow at residues 85-110 (ESTS…HHHH), 163-193 (SSAC…SPAD), and 345-540 (SSSC…PSRS). The segment covering 168–178 (TPPPGPGPGPC) has biased composition (pro residues). Residues 179-192 (SGPSSASPASPSPA) show a composition bias toward low complexity. Positions 207–349 (ALEKLEVDRR…QLQVISSSCG (143 aa)) form a coiled coil. A compositionally biased stretch (gly residues) spans 357-371 (GRGGGGSASGPGVRG). An Omega-N-methylarginine modification is found at R358. 2 stretches are compositionally biased toward polar residues: residues 384 to 414 (VPST…SSGC) and 442 to 456 (AQAT…QAPR). Position 476 is a phosphoserine (S476). Position 477 is a phosphothreonine (T477). The F-box domain occupies 548-592 (ILKMRAALFCIFTYLDTRTLLHAAEVCRDWRFVARHPAVWTRVLL). Residue S760 is modified to Phosphoserine.

As to quaternary structure, directly interacts with SKP1 and CUL1.

Substrate-recognition component of the SCF (SKP1-CUL1-F-box protein)-type E3 ubiquitin ligase complex. The chain is F-box only protein 41 (Fbxo41) from Mus musculus (Mouse).